The sequence spans 191 residues: Protein Ves (191 aa).

The protein belongs to the Ves family.

This is Protein Ves from Shigella boydii serotype 18 (strain CDC 3083-94 / BS512).